Consider the following 149-residue polypeptide: UPF0178 protein VF_0601 (149 aa).

Belongs to the UPF0178 family.

The sequence is that of UPF0178 protein VF_0601 from Aliivibrio fischeri (strain ATCC 700601 / ES114) (Vibrio fischeri).